We begin with the raw amino-acid sequence, 560 residues long: Platelet glycoprotein V (560 aa).

An N-terminal signal peptide occupies residues 1-16 (MLRGTLLCAVLGLLRA). An LRRNT domain is found at 17–50 (QPFPCPPACKCVFRDAAQCSGGDVARISALGLPT). Over 17 to 523 (QPFPCPPACK…KGQDHSPFWG (507 aa)) the chain is Extracellular. Asn-51 is a glycosylation site (N-linked (GlcNAc...) asparagine). LRR repeat units follow at residues 75–96 (VLQR…TFSD), 99–120 (KLKT…LLDK), 123–144 (LLEQ…MFQK), 147–168 (NLQE…LFTN), 171–193 (NLKL…LGAQ), 195–216 (KLER…LLNS), 219–240 (ALTE…AFDR), 243–264 (NLSS…LFLH), 267–288 (NLTL…LFGE), 291–312 (GLQE…AFRN), 340–361 (ELQV…LLRG), 364–385 (KLRQ…LFRN), and 388–409 (SLES…VFGA). N-linked (GlcNAc...) (complex) asparagine glycosylation occurs at Asn-181. A glycan (N-linked (GlcNAc...) (complex) asparagine) is linked at Asn-243. N-linked (GlcNAc...) asparagine glycans are attached at residues Asn-267, Asn-298, and Asn-312. N-linked (GlcNAc...) asparagine glycosylation occurs at Asn-385. The 54-residue stretch at 421–474 (NSWRCDCGLGPFLGWLRQHLGLVGGEEPPRCAGPGAHAGLPLWALPGGDAECPG) folds into the LRRCT domain. The segment at 469–498 (DAECPGPRGPPPRPAADSSSEAPVHPALAP) is disordered. Residue Asn-499 is glycosylated (N-linked (GlcNAc...) asparagine). A helical membrane pass occupies residues 524 to 544 (FYFLLLAVQAMITVIIVFAMI). At 545 to 560 (KIGQLFRKLIRERALG) the chain is on the cytoplasmic side.

The N-terminus is blocked. Platelets and megakaryocytes.

The protein localises to the membrane. Its function is as follows. The GPIb-V-IX complex functions as the vWF receptor and mediates vWF-dependent platelet adhesion to blood vessels. The adhesion of platelets to injured vascular surfaces in the arterial circulation is a critical initiating event in hemostasis. In Homo sapiens (Human), this protein is Platelet glycoprotein V (GP5).